A 357-amino-acid chain; its full sequence is tRNA-specific 2-thiouridylase MnmA (357 aa).

ATP-binding positions include 6-13 (AMSGGVDS) and leucine 32. The active-site Nucleophile is the cysteine 101. Cysteine 101 and cysteine 193 form a disulfide bridge. Glycine 125 contributes to the ATP binding site. An interaction with tRNA region spans residues 143–145 (KDQ). Catalysis depends on cysteine 193, which acts as the Cysteine persulfide intermediate.

The protein belongs to the MnmA/TRMU family.

It is found in the cytoplasm. It catalyses the reaction S-sulfanyl-L-cysteinyl-[protein] + uridine(34) in tRNA + AH2 + ATP = 2-thiouridine(34) in tRNA + L-cysteinyl-[protein] + A + AMP + diphosphate + H(+). Its function is as follows. Catalyzes the 2-thiolation of uridine at the wobble position (U34) of tRNA, leading to the formation of s(2)U34. The sequence is that of tRNA-specific 2-thiouridylase MnmA from Mycolicibacterium vanbaalenii (strain DSM 7251 / JCM 13017 / BCRC 16820 / KCTC 9966 / NRRL B-24157 / PYR-1) (Mycobacterium vanbaalenii).